A 579-amino-acid polypeptide reads, in one-letter code: MEARGKVVGVIGNLVTIEVVGTVSMNEIVFIKTGGRSLKAEIIRIRDGEVDAQVFEMTRGIAVGDDIEFTNKLLTVELGPGLLSQVYDGLQNPLPELAAQCGFFLERGLYLSALDRKKKWHFNATAKVGDIVVAGDFLGFVIEGTIKHKIMIPFDRRDSYSIVEIVSDGDYTIDDKIAVVENDAGGKHIITMSFHWPVKIPITNYKERLIPSEPMVTQTRIIDTFFPVAKGGTFCIPGPFGAGKTVLQQVTSRNADVDIVIIAACGERAGEVVETLKEFPELIDPRTGKSLMERTCIICNTSSMPVAAREASVYTAITIGEYYRQMGLDILLLADSTSRWAQAMREMSGRLEEIPGEEAFPAYLESVIASFYERAGIVVLNDGSFGSVTVGGSVSPAGGNFEEPVTQATLKVVGAFHGLTRERSDARKFPAINPLESWSKYRGVVEFGKTEYARDFLAKGNEINQMMKVVGEEGISNGDFLVYLKSELLDSCYLQQNSFDSVDAAVNPERQNYMFDMLYDILQSDFKFESKLEARGFINELRQNILDMNLTPFKEEKFNKLEVSLKNLVRSKKLDFRGA.

238 to 245 contributes to the ATP binding site; that stretch reads GPFGAGKT.

Belongs to the ATPase alpha/beta chains family.

It catalyses the reaction ATP + H2O + 4 H(+)(in) = ADP + phosphate + 5 H(+)(out). Produces ATP from ADP in the presence of a proton gradient across the membrane. The V-type alpha chain is a catalytic subunit. This chain is V-type ATP synthase alpha chain, found in Borrelia hermsii (strain HS1 / DAH).